The primary structure comprises 88 residues: Histone H2A-beta, sperm (88 aa).

This sequence belongs to the histone H2A family. As to quaternary structure, the nucleosome is a histone octamer containing two molecules each of H2A, H2B, H3 and H4 assembled in one H3-H4 heterotetramer and two H2A-H2B heterodimers. The octamer wraps approximately 147 bp of DNA. In terms of processing, monoubiquitination in C-terminus gives a specific tag for epigenetic transcriptional repression.

The protein localises to the nucleus. It is found in the chromosome. Core component of nucleosome. Nucleosomes wrap and compact DNA into chromatin, limiting DNA accessibility to the cellular machineries which require DNA as a template. Histones thereby play a central role in transcription regulation, DNA repair, DNA replication and chromosomal stability. DNA accessibility is regulated via a complex set of post-translational modifications of histones, also called histone code, and nucleosome remodeling. The chain is Histone H2A-beta, sperm from Strongylocentrotus purpuratus (Purple sea urchin).